A 206-amino-acid chain; its full sequence is Urease accessory protein UreE (206 aa).

The disordered stretch occupies residues P136–K206. Basic and acidic residues-rich tracts occupy residues Q148–E169 and H177–G191. Positions H192–K206 are enriched in basic residues.

This sequence belongs to the UreE family.

The protein resides in the cytoplasm. Involved in urease metallocenter assembly. Binds nickel. Probably functions as a nickel donor during metallocenter assembly. The chain is Urease accessory protein UreE from Bradyrhizobium sp. (strain BTAi1 / ATCC BAA-1182).